Reading from the N-terminus, the 237-residue chain is Ribosomal RNA small subunit methyltransferase G (237 aa).

S-adenosyl-L-methionine-binding positions include Gly78, Phe83, 129-130 (AE), and Arg148.

It belongs to the methyltransferase superfamily. RNA methyltransferase RsmG family.

It is found in the cytoplasm. Its function is as follows. Specifically methylates the N7 position of a guanine in 16S rRNA. This chain is Ribosomal RNA small subunit methyltransferase G, found in Streptococcus pyogenes serotype M3 (strain ATCC BAA-595 / MGAS315).